Reading from the N-terminus, the 317-residue chain is Porphobilinogen deaminase (317 aa).

Cys242 is subject to S-(dipyrrolylmethanemethyl)cysteine.

This sequence belongs to the HMBS family. Monomer. Requires dipyrromethane as cofactor.

The catalysed reaction is 4 porphobilinogen + H2O = hydroxymethylbilane + 4 NH4(+). The protein operates within porphyrin-containing compound metabolism; protoporphyrin-IX biosynthesis; coproporphyrinogen-III from 5-aminolevulinate: step 2/4. In terms of biological role, tetrapolymerization of the monopyrrole PBG into the hydroxymethylbilane pre-uroporphyrinogen in several discrete steps. The chain is Porphobilinogen deaminase from Colwellia psychrerythraea (strain 34H / ATCC BAA-681) (Vibrio psychroerythus).